The primary structure comprises 1130 residues: Sodium/potassium/calcium exchanger 1 (1130 aa).

Residues 1–419 are Extracellular-facing; sequence MGKLIRMGTQ…DLFSVEDRRQ (419 aa). The segment at 104–209 is disordered; that stretch reads PSIAMEDTPN…SPTATVRDRE (106 aa). Polar residues predominate over residues 125-136; sequence LKNSYSPTTAGT. Positions 170–187 are enriched in basic and acidic residues; the sequence is PRGERKNSSPTHAREKGR. Residues asparagine 176 and asparagine 273 are each glycosylated (N-linked (GlcNAc...) asparagine). Residues 274 to 295 form a disordered region; it reads ISTTPQGAVPQHTPATSEEQMT. Polar residues predominate over residues 286 to 295; that stretch reads TPATSEEQMT. Residues 420–440 traverse the membrane as a helical segment; it reads GWVVLHIFGMMYVFVALAIVC. Residues 441–464 lie on the Cytoplasmic side of the membrane; the sequence is DEYFVPALGVITHKLQISEDVAGA. An Alpha-1 repeat occupies 461–501; that stretch reads VAGATFMAAGGSAPELFTSLIGVFISHSNVGIGTIVGSAVF. Residues 465–485 traverse the membrane as a helical segment; sequence TFMAAGGSAPELFTSLIGVFI. Residues 486-489 lie on the Extracellular side of the membrane; that stretch reads SHSN. A helical membrane pass occupies residues 490–510; it reads VGIGTIVGSAVFNILFVIGTC. Over 511-530 the chain is Cytoplasmic; it reads ALFSREILNLTWWPLFRDVS. The chain crosses the membrane as a helical span at residues 531-551; that stretch reads FYILDLSMLIVFFLDSFIAWW. A topological domain (extracellular) is located at residue glutamate 552. A helical transmembrane segment spans residues 553 to 573; sequence SLLLLLAYALYVFTMKWNKQI. At 574-938 the chain is on the cytoplasmic side; sequence ELWVKEQLSR…SLEWPDSRQK (365 aa). Residues 598–619 are disordered; sequence PSEDAVEENEQQDSKKLKLPSV. Serine 625 bears the Phosphoserine mark. The interval 650–932 is disordered; it reads GEARPSKDKQ…ENEEPLSLEW (283 aa). Residues 661 to 675 are compositionally biased toward polar residues; sequence SLNQEARVLSQTKAE. A Phosphothreonine modification is found at threonine 690. Over residues 703-715 the composition is skewed to acidic residues; sequence QEDDPGCQEDVDE. A compositionally biased stretch (basic and acidic residues) spans 730 to 751; it reads ETETEGKKDEQEGETEAERKED. Acidic residues-rich tracts occupy residues 766-782 and 802-820; these read GETEAEGKEDEQEGETE and QEGETEAEGKEDEQEGETE. Over residues 833–855 the composition is skewed to basic and acidic residues; sequence AESKEVEQERETEAEGKDKHEGQ. Acidic residues-rich tracts occupy residues 870 to 880 and 896 to 928; these read GETEANAEDQC and DGGDSEEEEDEEDEEEEEEEDEEEEEEENEEPL. A helical membrane pass occupies residues 939–959; it reads QAIYLFLLPIVFPLWLTIPDV. Topologically, residues 960-966 are extracellular; sequence RRQESRK. The chain crosses the membrane as a helical span at residues 967 to 987; the sequence is FFVITFLGSIIWIAMFSYLMV. Residues 988-1002 lie on the Cytoplasmic side of the membrane; it reads WWAHQVGETIGISEE. A helical transmembrane segment spans residues 1003–1023; that stretch reads IMGLTILAAGTSIPDLITSVI. One copy of the Alpha-2 repeat lies at 1010 to 1041; sequence AAGTSIPDLITSVIVARKGLGDMAVSSSVGSN. Topologically, residues 1024–1041 are extracellular; sequence VARKGLGDMAVSSSVGSN. Residues 1042–1062 form a helical membrane-spanning segment; that stretch reads IFDITVGLPVPWLLFSLINAL. Topologically, residues 1063–1070 are cytoplasmic; that stretch reads QPVPVSSN. Residues 1071-1091 traverse the membrane as a helical segment; it reads GLFCAIVLLFLMLLFVIFSIA. Over 1092–1099 the chain is Extracellular; that stretch reads SCKWRMNK. A helical transmembrane segment spans residues 1100–1120; sequence ILGFTMFLLYFVFLVISVMLE. The Cytoplasmic segment spans residues 1121–1130; it reads DRIISCPVSV.

It belongs to the Ca(2+):cation antiporter (CaCA) (TC 2.A.19) family. SLC24A subfamily. In terms of processing, the uncleaved signal sequence is required for efficient membrane targeting and proper membrane integration and topology.

The protein resides in the cell membrane. It catalyses the reaction Ca(2+)(out) + K(+)(out) + 4 Na(+)(in) = Ca(2+)(in) + K(+)(in) + 4 Na(+)(out). Functionally, calcium, potassium:sodium antiporter that transports 1 Ca(2+) and 1 K(+) in exchange for 4 Na(+). Critical component of the visual transduction cascade, controlling the calcium concentration of outer segments during light and darkness. Light causes a rapid lowering of cytosolic free calcium in the outer segment of both retinal rod and cone photoreceptors and the light-induced lowering of calcium is caused by extrusion via this protein which plays a key role in the process of light adaptation. In Mus musculus (Mouse), this protein is Sodium/potassium/calcium exchanger 1.